A 258-amino-acid polypeptide reads, in one-letter code: Isoprenyl transferase 2 (258 aa).

D35 is an active-site residue. D35 contacts Mg(2+). Substrate is bound by residues 36 to 39 (GNRR), W40, R50, and 81 to 83 (SDD). The active-site Proton acceptor is the N84. Substrate is bound by residues R87, R207, and 213-215 (RLS). A Mg(2+)-binding site is contributed by E226.

Belongs to the UPP synthase family. As to quaternary structure, homodimer. Mg(2+) serves as cofactor.

Its function is as follows. Catalyzes the condensation of isopentenyl diphosphate (IPP) with allylic pyrophosphates generating different type of terpenoids. The chain is Isoprenyl transferase 2 from Streptomyces coelicolor (strain ATCC BAA-471 / A3(2) / M145).